A 203-amino-acid polypeptide reads, in one-letter code: Translation initiation factor IF-3 (203 aa).

Basic and acidic residues predominate over residues 172-182 (EAPKNEKKTKE). The interval 172-203 (EAPKNEKKTKENNPPFNRINLMKGENHAKNED) is disordered.

It belongs to the IF-3 family. Monomer.

It is found in the cytoplasm. IF-3 binds to the 30S ribosomal subunit and shifts the equilibrium between 70S ribosomes and their 50S and 30S subunits in favor of the free subunits, thus enhancing the availability of 30S subunits on which protein synthesis initiation begins. This is Translation initiation factor IF-3 from Helicobacter pylori (strain ATCC 700392 / 26695) (Campylobacter pylori).